Consider the following 508-residue polypeptide: MAP kinase kinase MKK1/SSP32 (508 aa).

Disordered stretches follow at residues M1–K21, I35–N95, and E130–N158. Polar residues predominate over residues I35–Y47. Residues S48–T66 are compositionally biased toward low complexity. 2 stretches are compositionally biased toward polar residues: residues R67–T79 and L131–N158. S192 bears the Phosphoserine mark. The 268-residue stretch at I221–I488 folds into the Protein kinase domain. ATP is bound by residues L227–V235 and K250. D349 (proton acceptor) is an active-site residue.

This sequence belongs to the protein kinase superfamily. STE Ser/Thr protein kinase family. MAP kinase kinase subfamily.

It catalyses the reaction L-seryl-[protein] + ATP = O-phospho-L-seryl-[protein] + ADP + H(+). It carries out the reaction L-threonyl-[protein] + ATP = O-phospho-L-threonyl-[protein] + ADP + H(+). The enzyme catalyses L-tyrosyl-[protein] + ATP = O-phospho-L-tyrosyl-[protein] + ADP + H(+). Functionally, involved in a signal transduction pathway that play a role in yeast cell morphogenesis and cell growth. This pathway seems to start by SMP3; then involve the kinase PKC1 that may act on the BCK1 kinase that then phosphorylates MKK1 and MKK2 which themselves phosphorylate the MPK1 kinase. In Saccharomyces cerevisiae (strain ATCC 204508 / S288c) (Baker's yeast), this protein is MAP kinase kinase MKK1/SSP32 (MKK1).